We begin with the raw amino-acid sequence, 218 residues long: Glutathione S-transferase Mu 1 (218 aa).

One can recognise a GST N-terminal domain in the interval 2–88; sequence PMILGYWNVR…YLARKHHLDG (87 aa). 7–8 lines the glutathione pocket; it reads YW. T34 carries the post-translational modification Phosphothreonine. Glutathione contacts are provided by residues 43–46, K50, and 59–60; these read RSQW and NL. Phosphoserine is present on S67. Position 72–73 (72–73) interacts with glutathione; that stretch reads QS. Residues 90–208 form the GST C-terminal domain; the sequence is TEEERIRADI…KSSRYIATPI (119 aa). Y116 provides a ligand contact to substrate. Position 210 is a phosphoserine (S210).

As to quaternary structure, homodimer.

It localises to the cytoplasm. It catalyses the reaction RX + glutathione = an S-substituted glutathione + a halide anion + H(+). The catalysed reaction is prostaglandin A2 + glutathione = prostaglandin A2-S-(R)-glutathione. The enzyme catalyses prostaglandin J2 + glutathione = prostaglandin J2-S-(R)-glutathione. It carries out the reaction prostaglandin J2 + glutathione = prostaglandin J2-S-(S)-glutathione. It catalyses the reaction prostaglandin A2 + glutathione = prostaglandin A2-S-(S)-glutathione. The catalysed reaction is 11(S)-hydroxy-14(S),15(S)-epoxy-(5Z,8Z,12E)-eicosatrienoate + glutathione = (11S,15S)-dihydroxy-14(R)-S-glutathionyl-(5Z,8Z,12E)-eicosatrienoate. In terms of biological role, conjugation of reduced glutathione to a wide number of exogenous and endogenous hydrophobic electrophiles. Involved in the formation of glutathione conjugates of both prostaglandin A2 (PGA2) and prostaglandin J2 (PGJ2). Participates in the formation of novel hepoxilin regioisomers. This chain is Glutathione S-transferase Mu 1, found in Mus musculus (Mouse).